Here is a 188-residue protein sequence, read N- to C-terminus: Cell division protein SepF (188 aa).

Residues 29 to 53 (EQQDQDQRATQADGGALATLGDSNP) are disordered.

It belongs to the SepF family. As to quaternary structure, homodimer. Interacts with FtsZ.

Its subcellular location is the cytoplasm. Functionally, cell division protein that is part of the divisome complex and is recruited early to the Z-ring. Probably stimulates Z-ring formation, perhaps through the cross-linking of FtsZ protofilaments. Its function overlaps with FtsA. The chain is Cell division protein SepF from Synechococcus sp. (strain CC9902).